The chain runs to 846 residues: MAP7 domain-containing protein 1 (846 aa).

Disordered regions lie at residues 1-153 and 186-210; these read MESG…ERAK and EQRL…EKNK. Residues 24–41 are compositionally biased toward pro residues; sequence EPRPSPEGDPSPPPPPTP. Phosphothreonine is present on residues Thr-49 and Thr-53. At Ser-95 the chain carries Phosphoserine. Thr-99 bears the Phosphothreonine mark. Positions 113-123 are enriched in low complexity; that stretch reads RSSQPSPTTVP. Phosphoserine occurs at positions 115 and 118. Thr-120 carries the phosphothreonine modification. A phosphoserine mark is found at Ser-125 and Ser-127. Residues 130–224 adopt a coiled-coil conformation; that stretch reads AKQDVKKAGE…AAIQRSVKKT (95 aa). The span at 132 to 153 shows a compositional bias: basic and acidic residues; that stretch reads QDVKKAGERHKLAKERREERAK. A phosphoserine mark is found at Ser-256, Ser-275, Ser-315, Ser-368, and Ser-401. A disordered region spans residues 318–816; sequence TLPRNGRDQG…KGTAGDKSLG (499 aa). The span at 407–437 shows a compositional bias: basic and acidic residues; the sequence is RRLEATPVQKKEKKDKERENEKEKSALARER. Positions 414 to 443 form a coiled coil; sequence VQKKEKKDKERENEKEKSALARERNLKKRQ. A phosphoserine mark is found at Ser-444, Ser-448, Ser-454, and Ser-460. Residues 460 to 471 show a composition bias toward low complexity; sequence SPKSKARPSSPS. A Glycyl lysine isopeptide (Lys-Gly) (interchain with G-Cter in SUMO2) cross-link involves residue Lys-462. Phosphoserine occurs at positions 479 and 496. Residues 479-497 show a composition bias toward pro residues; it reads SPCPSPGPGHALPPKPPSP. Positions 523–539 are enriched in basic and acidic residues; sequence PEDKNHRKSRAAEEKEP. The span at 542–556 shows a compositional bias: pro residues; the sequence is PASPAPSPVPSPTPA. Ser-544, Ser-548, and Ser-552 each carry phosphoserine. Thr-554 is modified (phosphothreonine). Over residues 568 to 579 the composition is skewed to low complexity; it reads PAETAVPAVPAA. Residues 599–740 are a coiled coil; it reads TTDREEATRL…AETKKQDAKE (142 aa). Residues 600–740 show a composition bias toward basic and acidic residues; that stretch reads TDREEATRLL…AETKKQDAKE (141 aa). Residue Thr-818 is modified to Phosphothreonine.

This sequence belongs to the MAP7 family.

The protein localises to the cytoplasm. Its subcellular location is the cytoskeleton. It is found in the spindle. It localises to the microtubule organizing center. The protein resides in the centrosome. The protein localises to the midbody. In terms of biological role, microtubule-stabilizing protein involved in the control of cell motility and neurite outgrowth. Facilitate microtubule stabilization through the maintenance of acetylated stable microtubules. In Mus musculus (Mouse), this protein is MAP7 domain-containing protein 1 (Map7d1).